A 504-amino-acid chain; its full sequence is ATP synthase subunit alpha (504 aa).

ATP is bound at residue G169–T176.

It belongs to the ATPase alpha/beta chains family. F-type ATPases have 2 components, CF(1) - the catalytic core - and CF(0) - the membrane proton channel. CF(1) has five subunits: alpha(3), beta(3), gamma(1), delta(1), epsilon(1). CF(0) has three main subunits: a(1), b(2) and c(9-12). The alpha and beta chains form an alternating ring which encloses part of the gamma chain. CF(1) is attached to CF(0) by a central stalk formed by the gamma and epsilon chains, while a peripheral stalk is formed by the delta and b chains.

Its subcellular location is the cell membrane. It carries out the reaction ATP + H2O + 4 H(+)(in) = ADP + phosphate + 5 H(+)(out). Produces ATP from ADP in the presence of a proton gradient across the membrane. The alpha chain is a regulatory subunit. This chain is ATP synthase subunit alpha, found in Clostridium botulinum (strain Eklund 17B / Type B).